We begin with the raw amino-acid sequence, 309 residues long: Zinc transporter ZIP2 (309 aa).

Topologically, residues 1–8 (MEVLLGVK) are extracellular. A helical membrane pass occupies residues 9-29 (IGCLLALLVLTLGCGLTPIYV). Residues 30–43 (KWFQMDAATGHHHR) lie on the Cytoplasmic side of the membrane. The chain crosses the membrane as a helical span at residues 44 to 64 (VLSLLGCTSAGVFLGAGLMHM). Topologically, residues 65 to 103 (TAEALEGIESEIQKFVEQNSTGSKGNSSRDAASSYVEYP) are extracellular. Residues 104 to 124 (YGELVISLGFFFVFLLESLAL) traverse the membrane as a helical segment. Topologically, residues 125-164 (QCCHGAAGGSTVQEEEWGGTHAFGFHKHPAVPSPSRGPLR) are cytoplasmic. The helical transmembrane segment at 165–185 (ALVLLLSLSFHSVFEGLAVGL) threads the bilayer. Residues histidine 175 and glutamate 179 each coordinate Zn(2+). The Extracellular segment spans residues 186-191 (QATVAA). A helical membrane pass occupies residues 192-212 (TIQLCVAVLAHKGLVVFSVGL). Histidine 202 lines the Zn(2+) pocket. Residues 213-225 (RLGKIGTGPRWAT) are Cytoplasmic-facing. The helical transmembrane segment at 226 to 246 (FCILSLALMSPVGLALGLTVA) threads the bilayer. Topologically, residues 247 to 258 (GGASGQTQGLAQ) are extracellular. A helical membrane pass occupies residues 259-279 (AVLEGIAAGTFLYVTFLEILP). Glutamate 276 serves as a coordination point for Zn(2+). The Cytoplasmic segment spans residues 280-288 (RELACPEAP). Residues 289–309 (LAKYSCVAAGFAFMALIALWA) traverse the membrane as a helical segment.

The protein belongs to the ZIP transporter (TC 2.A.5) family. High expression in the liver, skin and ovary.

It localises to the cell membrane. It catalyses the reaction Zn(2+)(in) = Zn(2+)(out). The enzyme catalyses Cd(2+)(in) = Cd(2+)(out). In terms of biological role, transporter for the divalent cation Zn(2+). Mediates the influx of Zn(2+) into cells from extracellular space. The Zn(2+) uniporter activity is independent of H(+)-driving force, but is modulated by extracellular pH and membrane potential. Transports also other divalent cations Zn(2+), Cd2(+), Cu2(+), Co2(+) in the order of decreasing affinity, respectively. In the skin, aids in the differentiation of keratinocytes in the epidermis. In Mus musculus (Mouse), this protein is Zinc transporter ZIP2 (Slc39a2).